The sequence spans 682 residues: Protein asunder (682 aa).

Residues 517–570 adopt a coiled-coil conformation; the sequence is NGARLKLSKAKDQYRLLYRELEQLIHLNATTVHHKNLLESLQSLRAAYGEAKSE. Positions 571–583 are enriched in polar residues; that stretch reads PNSSLLRSYTESP. The interval 571 to 612 is disordered; that stretch reads PNSSLLRSYTESPHSPERLEPIPSGGSSGSNSNSLLKASKRR. Positions 606–612 match the Nuclear localization signal (NLS) motif; sequence LKASKRR.

This sequence belongs to the Integrator subunit 13 family. As to quaternary structure, belongs to the multiprotein complex Integrator, at least composed of IntS1, IntS2, IntS3, IntS4, omd/IntS5, IntS6, defl/IntS7, IntS8, IntS9, IntS10, IntS11, IntS12, asun/IntS13, IntS14 and IntS15. The core complex associates with protein phosphatase 2A subunits mts/PP2A and Pp2A-29B, to form the Integrator-PP2A (INTAC) complex. In terms of processing, phosphorylated.

The protein resides in the nucleus. The protein localises to the cytoplasm. Its subcellular location is the perinuclear region. Functionally, component of the integrator complex, a multiprotein complex that terminates RNA polymerase II (Pol II) transcription in the promoter-proximal region of genes. The integrator complex provides a quality checkpoint during transcription elongation by driving premature transcription termination of transcripts that are unfavorably configured for transcriptional elongation: the complex terminates transcription by (1) catalyzing dephosphorylation of the C-terminal domain (CTD) of Pol II subunit Polr2A/Rbp1 and Spt5, and (2) degrading the exiting nascent RNA transcript via endonuclease activity. The integrator complex is also involved in the 3'-end processing of the U7 snRNA, and also the spliceosomal snRNAs U1, U2, U4 and U5. This is Protein asunder (asun) from Drosophila ananassae (Fruit fly).